A 233-amino-acid polypeptide reads, in one-letter code: Peroxisomal membrane protein 11-5 (233 aa).

Residues 1–92 (MSSLESARAD…PLILLGKSKN (92 aa)) are Cytoplasmic-facing. Residues 93 to 113 (ALLSTFLFLDQIVWAGRTGIY) traverse the membrane as a helical segment. Residues 114–206 (KNKERAEFLS…LLQLAPKKVT (93 aa)) lie on the Lumenal side of the membrane. Residues 207 to 226 (PRVTGAFGFASSLIACYQLL) traverse the membrane as a helical segment.

This sequence belongs to the peroxin-11 family. In terms of tissue distribution, expressed in seedlings, roots, shoots, leaf sheaths, flag leaf, panicles, spikelets, and endosperm.

It localises to the peroxisome membrane. Functionally, involved in peroxisomal proliferation. In Oryza sativa subsp. japonica (Rice), this protein is Peroxisomal membrane protein 11-5 (PEX11-5).